A 329-amino-acid polypeptide reads, in one-letter code: ATP-dependent (S)-NAD(P)H-hydrate dehydratase (329 aa).

The transit peptide at 1-28 (MALGPGCRAVRGCRPVLKRAFSLHKAHS) directs the protein to the mitochondrion. In terms of domain architecture, YjeF C-terminal spans 35–326 (ILQLVRSVVP…AEVGPAFRRL (292 aa)). Lysine 49 is modified (N6-acetyllysine). A Phosphotyrosine modification is found at tyrosine 67. Residues glycine 135 and 188–194 (NHVEFGR) contribute to the (6S)-NADPHX site. ATP is bound by residues 228 to 232 (KGEQD) and 247 to 256 (GSGRRCGGQG). Aspartate 257 serves as a coordination point for (6S)-NADPHX.

This sequence belongs to the NnrD/CARKD family. The cofactor is Mg(2+).

Its subcellular location is the mitochondrion. The catalysed reaction is (6S)-NADHX + ATP = ADP + phosphate + NADH + H(+). It catalyses the reaction (6S)-NADPHX + ATP = ADP + phosphate + NADPH + H(+). Catalyzes the dehydration of the S-form of NAD(P)HX at the expense of ATP, which is converted to ADP. Together with NAD(P)HX epimerase, which catalyzes the epimerization of the S- and R-forms, the enzyme allows the repair of both epimers of NAD(P)HX, a damaged form of NAD(P)H that is a result of enzymatic or heat-dependent hydration. This Bos taurus (Bovine) protein is ATP-dependent (S)-NAD(P)H-hydrate dehydratase.